A 206-amino-acid polypeptide reads, in one-letter code: Protein YmaB (206 aa).

This Bacillus subtilis (strain 168) protein is Protein YmaB (ymaB).